The chain runs to 503 residues: GMP synthase [glutamine-hydrolyzing] (503 aa).

In terms of domain architecture, Glutamine amidotransferase type-1 spans 1 to 189 (MVLVLDFGSQ…FLELAGVKRD (189 aa)). Residue Cys78 is the Nucleophile of the active site. Residues His164 and Glu166 contribute to the active site. Positions 190–378 (WTPEHVLEEL…LGLPDTLRLR (189 aa)) constitute a GMPS ATP-PPase domain. 217–223 (SGGVDSS) lines the ATP pocket.

As to quaternary structure, homodimer.

The catalysed reaction is XMP + L-glutamine + ATP + H2O = GMP + L-glutamate + AMP + diphosphate + 2 H(+). Its pathway is purine metabolism; GMP biosynthesis; GMP from XMP (L-Gln route): step 1/1. In terms of biological role, catalyzes the synthesis of GMP from XMP. The chain is GMP synthase [glutamine-hydrolyzing] from Thermus thermophilus (strain ATCC 27634 / DSM 579 / HB8).